A 435-amino-acid polypeptide reads, in one-letter code: 3-phosphoshikimate 1-carboxyvinyltransferase (435 aa).

3-phosphoshikimate contacts are provided by Lys23, Ser24, and Arg28. Lys23 contributes to the phosphoenolpyruvate binding site. Residues Gly96 and Arg124 each coordinate phosphoenolpyruvate. 3-phosphoshikimate is bound by residues Ser167, Ser168, Gln169, Ser196, Glu311, and His340. Gln169 is a phosphoenolpyruvate binding site. The active-site Proton acceptor is Glu311. Phosphoenolpyruvate-binding residues include Arg344, Arg385, and Lys410.

The protein belongs to the EPSP synthase family. Monomer.

The protein localises to the cytoplasm. It catalyses the reaction 3-phosphoshikimate + phosphoenolpyruvate = 5-O-(1-carboxyvinyl)-3-phosphoshikimate + phosphate. It functions in the pathway metabolic intermediate biosynthesis; chorismate biosynthesis; chorismate from D-erythrose 4-phosphate and phosphoenolpyruvate: step 6/7. In terms of biological role, catalyzes the transfer of the enolpyruvyl moiety of phosphoenolpyruvate (PEP) to the 5-hydroxyl of shikimate-3-phosphate (S3P) to produce enolpyruvyl shikimate-3-phosphate and inorganic phosphate. The protein is 3-phosphoshikimate 1-carboxyvinyltransferase of Mycolicibacterium paratuberculosis (strain ATCC BAA-968 / K-10) (Mycobacterium paratuberculosis).